The chain runs to 244 residues: Proteasome subunit alpha 2 (244 aa).

Belongs to the peptidase T1A family. As to quaternary structure, the 20S proteasome core is composed of 14 alpha and 14 beta subunits that assemble into four stacked heptameric rings, resulting in a barrel-shaped structure. The two inner rings, each composed of seven catalytic beta subunits, are sandwiched by two outer rings, each composed of seven alpha subunits. The catalytic chamber with the active sites is on the inside of the barrel. Has a gated structure, the ends of the cylinder being occluded by the N-termini of the alpha-subunits. Is capped at one or both ends by the proteasome regulatory ATPase, PAN.

The protein resides in the cytoplasm. Its activity is regulated as follows. The formation of the proteasomal ATPase PAN-20S proteasome complex, via the docking of the C-termini of PAN into the intersubunit pockets in the alpha-rings, triggers opening of the gate for substrate entry. Interconversion between the open-gate and close-gate conformations leads to a dynamic regulation of the 20S proteasome proteolysis activity. In terms of biological role, component of the proteasome core, a large protease complex with broad specificity involved in protein degradation. The polypeptide is Proteasome subunit alpha 2 (Haloarcula marismortui (strain ATCC 43049 / DSM 3752 / JCM 8966 / VKM B-1809) (Halobacterium marismortui)).